The following is a 279-amino-acid chain: Large ribosomal subunit protein mL46 (279 aa).

Lysine 230 is modified (N6-acetyllysine).

It belongs to the mitochondrion-specific ribosomal protein mL46 family. As to quaternary structure, component of the mitochondrial large ribosomal subunit (mt-LSU). Mature mammalian 55S mitochondrial ribosomes consist of a small (28S) and a large (39S) subunit. The 28S small subunit contains a 12S ribosomal RNA (12S mt-rRNA) and 30 different proteins. The 39S large subunit contains a 16S rRNA (16S mt-rRNA), a copy of mitochondrial valine transfer RNA (mt-tRNA(Val)), which plays an integral structural role, and 52 different proteins. mL46 is located at the central protuberance.

It is found in the mitochondrion. In Homo sapiens (Human), this protein is Large ribosomal subunit protein mL46 (MRPL46).